We begin with the raw amino-acid sequence, 632 residues long: tRNA uridine 5-carboxymethylaminomethyl modification enzyme MnmG (632 aa).

Residue 14–19 (GAGHAG) coordinates FAD. Position 273–287 (273–287 (GPRYCPSFEDKIMRF)) interacts with NAD(+).

The protein belongs to the MnmG family. Homodimer. Heterotetramer of two MnmE and two MnmG subunits. FAD is required as a cofactor.

The protein resides in the cytoplasm. NAD-binding protein involved in the addition of a carboxymethylaminomethyl (cmnm) group at the wobble position (U34) of certain tRNAs, forming tRNA-cmnm(5)s(2)U34. This chain is tRNA uridine 5-carboxymethylaminomethyl modification enzyme MnmG, found in Clostridium novyi (strain NT).